The primary structure comprises 1903 residues: MMDSGMEEDVTLPGTLSGCSGLHPVLPSDLDVISDTTGLGNGVLPIMSEEKVSPTRARNMKDFENQITELKKENFNLKLRIYFLEERIQQEFAGPTEHIYKKNIELKVEVESLKRELQERDQLLVKASKAVESLAEGGGSEIQRVKEDARKKVQQVEELLTKRIHLLEEDVKAAQAELEKAFAGTETEKALRLSLESKLSAMKKMQEGDLEMTLALEEKDRLIEELKLSLKSKEALIQCLKEEKSQMASPDENVSSGELRGLSATLREEKERDAEERQKERNHFEERIQALQEDLREKEREIATEKKNSLKRDKAIQGLTMALKSKEKEVEELNSIIKELTADSTQSREAPLKTQVSEFEVRESENCEAALAEKEALLAKLHSENVTKNTENHRLLRNVKKVTQELNDLKKEKLRLERDLEEAHREGNRGARTIHDLRNEVEKLRKEVCEREKAVEKHYKSLPGESSSKFHSQEQVVKGLTESASQEDLLLQKSNEKDLEAIQQNCYLMTAEELKFGSDGLITEKCSQQSPDSKLIFSKEKQQSEYEGLTGDLKTEQNVYAHLAKNLQDTDSKLQAELKRVLALRKQLEQDVLAYRNLQTALQEQLSEIRKREEEPFSFYSDQTSYLSICLEEHSQFQLEHFSQEEIKKKVIDLIQLVKDLHADNQHLKKTIFDISCMGVQGNDRLESTKQAELMASKADEDTLKFKADDENHFQSDQHLEQSREIMEDYAEGGGKDGYVRHMDSNILDHDGAHTPDTSEDHSLEDELLSLLATFFSKKATPSLESRPDLLKALGALLLERICLAEQGSPGDHSDSKAEKALEQVAVRLRDELGHSCLANSFSKSHSELKSPRGTWLVKTGDEAKVELKSVSVQTMTIEDSTRGFKPERKREAWAGKPEEAVFSTELESEALGEMPGLQATHLSFPSAIDKDDQKTGLLIQLKTPELLENLYNLPASQEVVAQLQGQVLELQKELKEYKIRNKQLLDKLILAEAMMEGMAVPNSTPVNVPAAQAVVRTAFQGKPGEQEGHETTHSAGRDKEVDSDQYTSFEIDSEICPPDDLALLPACKENLEDFLGPPSIATYLDSKSQLSVKVSVVGTDQSENINLPDDTEALKQKIHDLQTELEGYRNIIVQLQKHSQCSEAIITVLCGTEGAQDGLNKPKGHIDEEEMTFSSLHQVRYVKHMKILRPLTPEIIDGKMLESLKQQLVEQEQELQKEQDLNLELFGEIHNLQNKFRDLSPSRYDSLVQSQARELSLQRQQIKDSHDICVVCHQHMSTMIKAFEELLQASDVDSCVAEGFREQLTQCAGLLEQLEKLFLHGKSARVEPHTQTELLRRLRTEEDNLPYQHLLPESPEPSASHALSDDEMSEKSFLSREPKPDSETEKYPTIASRFPQDLLMEHIQEIRTLRKHLEESIKTNEKLRKQLERQGCETDQGSTNVSAYSSELHNSLTSEIQFLRKQNEALSTMLEKGSKEKQKENEKLRESLARKTESLEHLQLEYASVREENERLRRDISEKERQNQQLTQEVCSSLQELSRVQEEAKSRQQLLLQKDELLQSLQMELKVYEKLAEEHQKLQQESRGEACGGGQKGQDPFSNLHGLLKEIQVLRDQAERSIQTNNTLKSKLEKQLSQGSKQAQEGALTLAVQALSVTEWSLQLDKHDVNKCPEASDNSFDLFESTQAMAPKSASETPVLSGTDVDSLSCDSTSSATSPSCMPCLVAGRHLWASKSGHHMLCLIEDYDALYKQISWGQTLLAKMDIQTQEALSPTSQKLGPKASFSVPLSKFLSSMNTAKLILEKASRLLKLFWRVSVPTNGQCSLHCDQIGEMKAEITKLHKKLFEQEKKLQNTAKLLQQSKHQEKIIFDQLVITHQVLRKARGNLELRPRAAHPGTSSPSRPGS.

Positions 51 to 94 are CM1 motif; interacts with the gTuRC; that stretch reads KVSPTRARNMKDFENQITELKKENFNLKLRIYFLEERIQQEFAG. The segment at 244–282 is disordered; sequence KSQMASPDENVSSGELRGLSATLREEKERDAEERQKERN. Residues 246–256 show a composition bias toward polar residues; it reads QMASPDENVSS. Basic and acidic residues predominate over residues 266–282; it reads LREEKERDAEERQKERN. 2 positions are modified to phosphoserine: serine 485 and serine 544. The segment at 1022–1044 is disordered; sequence GKPGEQEGHETTHSAGRDKEVDS. The span at 1025–1043 shows a compositional bias: basic and acidic residues; sequence GEQEGHETTHSAGRDKEVD. Phosphothreonine is present on threonine 1193. 2 positions are modified to phosphoserine: serine 1241 and serine 1243. The segment at 1349-1387 is disordered; it reads QHLLPESPEPSASHALSDDEMSEKSFLSREPKPDSETEK. Basic and acidic residues predominate over residues 1370–1387; it reads SEKSFLSREPKPDSETEK. Phosphoserine is present on residues serine 1495, serine 1673, and serine 1676. The tract at residues 1736–1778 is interaction with CDK5R1; the sequence is HMLCLIEDYDALYKQISWGQTLLAKMDIQTQEALSPTSQKLGP. Required for centrosomal attachment, Golgi localization and CALM1 interaction regions lie at residues 1736-1903 and 1871-1880; these read HMLC…RPGS and VITHQVLRKA. The segment at 1883-1903 is disordered; the sequence is NLELRPRAAHPGTSSPSRPGS. A compositionally biased stretch (polar residues) spans 1894-1903; the sequence is GTSSPSRPGS. Position 1903 is a phosphoserine (serine 1903).

Homodimer. Interacts with CDK5R1 (p35 form). CDK5RAP1, CDK5RAP2 and CDK5RAP3 show competitive binding to CDK5R1. May form a complex with CDK5R1 and CDK5. Interacts with pericentrin/PCNT; the interaction is leading to centrosomal and Golgi localization of CDK5RAP2 and PCNT. Interacts with AKAP9; the interaction targets CDK5RAP2 and AKAP9 to Golgi apparatus. Interacts with TUBG1; the interaction is leading to the centrosomal localization of CDK5RAP2 and TUBG1. Interacts with TUBGCP3. Interacts with CALM1. Interacts with CDC20. Interacts with CEP68; degradation of CEP68 in early mitosis leads to removal of CDK5RAP2 from the centrosome which promotes centriole disengagement and subsequent centriole separation. Interacts with NCKAP5L. Interacts with LGALS3BP; this interaction may connect the pericentrosomal complex to the gamma-tubulin ring complex (gTuRC) to promote microtubule assembly and acetylation. Contrary to human, chimpanzee, bovine and dog orthologous proteins, does not interact with EB1/MAPRE1, possibly due to a divergence at the level of the critical residue 939, which is a proline in MAPRE1-binding orthologs and a leucine in mouse and rat. Interacts with CCDC66. Associates (via CM1 motif) with TUBGCP2 of the gTuRC; the interaction plays a role in gTuRC activation. Post-translationally, phosphorylated in vitro by CDK5.

It localises to the cytoplasm. The protein resides in the cytoskeleton. The protein localises to the microtubule organizing center. It is found in the centrosome. Its subcellular location is the golgi apparatus. Its function is as follows. Potential regulator of CDK5 activity via its interaction with CDK5R1. Negative regulator of centriole disengagement (licensing) which maintains centriole engagement and cohesion. Involved in regulation of mitotic spindle orientation. Plays a role in the spindle checkpoint activation by acting as a transcriptional regulator of both BUBR1 and MAD2 promoter. Together with EB1/MAPRE1, may promote microtubule polymerization, bundle formation, growth and dynamics at the plus ends. Regulates centrosomal maturation by recruitment of the gamma-tubulin ring complex (gTuRC) onto centrosomes. In complex with PDE4DIP isoform 13/MMG8/SMYLE, MAPRE1 and AKAP9, contributes to microtubules nucleation and extension from the centrosome to the cell periphery. Required for the recruitment of AKAP9 to centrosomes. Plays a role in neurogenesis. The polypeptide is CDK5 regulatory subunit-associated protein 2 (Cdk5rap2) (Rattus norvegicus (Rat)).